Here is a 433-residue protein sequence, read N- to C-terminus: Pyrimidine-nucleoside phosphorylase (433 aa).

81–83 serves as a coordination point for phosphate; that stretch reads KHS. Residues Gly-88 and Thr-90 each contribute to the K(+) site. Residues Thr-92, 108–110, and Thr-120 contribute to the phosphate site; that span reads KMS. Substrate is bound by residues Arg-168 and Lys-187. 3 residues coordinate K(+): Leu-243, Ala-246, and Glu-255.

Belongs to the thymidine/pyrimidine-nucleoside phosphorylase family. In terms of assembly, homodimer. K(+) serves as cofactor.

The enzyme catalyses uridine + phosphate = alpha-D-ribose 1-phosphate + uracil. It catalyses the reaction thymidine + phosphate = 2-deoxy-alpha-D-ribose 1-phosphate + thymine. It carries out the reaction 2'-deoxyuridine + phosphate = 2-deoxy-alpha-D-ribose 1-phosphate + uracil. Its function is as follows. Catalyzes phosphorolysis of the pyrimidine nucleosides uridine, thymidine and 2'-deoxyuridine with the formation of the corresponding pyrimidine base and ribose-1-phosphate. The chain is Pyrimidine-nucleoside phosphorylase (pdp) from Geobacillus stearothermophilus (Bacillus stearothermophilus).